The primary structure comprises 428 residues: Tyrosine--tRNA ligase (428 aa).

Position 36 (Tyr-36) interacts with L-tyrosine. The 'HIGH' region signature appears at Pro-41–Ser-50. L-tyrosine is bound by residues Tyr-169 and Gln-173. Residues Lys-229–Thr-233 carry the 'KMSKS' region motif. Lys-232 lines the ATP pocket. In terms of domain architecture, S4 RNA-binding spans Ile-361–Val-427.

This sequence belongs to the class-I aminoacyl-tRNA synthetase family. TyrS type 1 subfamily. Homodimer.

Its subcellular location is the cytoplasm. It carries out the reaction tRNA(Tyr) + L-tyrosine + ATP = L-tyrosyl-tRNA(Tyr) + AMP + diphosphate + H(+). Functionally, catalyzes the attachment of tyrosine to tRNA(Tyr) in a two-step reaction: tyrosine is first activated by ATP to form Tyr-AMP and then transferred to the acceptor end of tRNA(Tyr). In Syntrophus aciditrophicus (strain SB), this protein is Tyrosine--tRNA ligase.